Reading from the N-terminus, the 37-residue chain is Large ribosomal subunit protein bL36 (37 aa).

It belongs to the bacterial ribosomal protein bL36 family.

The chain is Large ribosomal subunit protein bL36 from Bacillus anthracis (strain A0248).